Reading from the N-terminus, the 282-residue chain is Pantothenate synthetase (282 aa).

30–37 contacts ATP; sequence MGYLHEGH. H37 (proton donor) is an active-site residue. A (R)-pantoate-binding site is contributed by Q61. Q61 serves as a coordination point for beta-alanine. 147–150 provides a ligand contact to ATP; that stretch reads GEKD. Position 153 (Q153) interacts with (R)-pantoate. Residues I176 and 184–187 contribute to the ATP site; that span reads KSSR.

This sequence belongs to the pantothenate synthetase family. As to quaternary structure, homodimer.

It is found in the cytoplasm. It carries out the reaction (R)-pantoate + beta-alanine + ATP = (R)-pantothenate + AMP + diphosphate + H(+). It participates in cofactor biosynthesis; (R)-pantothenate biosynthesis; (R)-pantothenate from (R)-pantoate and beta-alanine: step 1/1. Catalyzes the condensation of pantoate with beta-alanine in an ATP-dependent reaction via a pantoyl-adenylate intermediate. This chain is Pantothenate synthetase, found in Enterococcus faecalis (strain ATCC 700802 / V583).